The sequence spans 184 residues: Peptide deformylase (184 aa).

Fe cation contacts are provided by cysteine 111 and histidine 154. Glutamate 155 is a catalytic residue. Histidine 158 is a Fe cation binding site.

Belongs to the polypeptide deformylase family. It depends on Fe(2+) as a cofactor.

The catalysed reaction is N-terminal N-formyl-L-methionyl-[peptide] + H2O = N-terminal L-methionyl-[peptide] + formate. In terms of biological role, removes the formyl group from the N-terminal Met of newly synthesized proteins. Requires at least a dipeptide for an efficient rate of reaction. N-terminal L-methionine is a prerequisite for activity but the enzyme has broad specificity at other positions. The polypeptide is Peptide deformylase (Macrococcus caseolyticus (strain JCSC5402) (Macrococcoides caseolyticum)).